Here is a 120-residue protein sequence, read N- to C-terminus: NAD(P)H-quinone oxidoreductase subunit 3, chloroplastic (120 aa).

3 helical membrane passes run 9 to 29 (IFWA…FLSG), 62 to 82 (YYMF…LYPW), and 88 to 108 (VLGV…IVGL).

Belongs to the complex I subunit 3 family. NDH is composed of at least 16 different subunits, 5 of which are encoded in the nucleus.

It is found in the plastid. It localises to the chloroplast thylakoid membrane. It carries out the reaction a plastoquinone + NADH + (n+1) H(+)(in) = a plastoquinol + NAD(+) + n H(+)(out). The enzyme catalyses a plastoquinone + NADPH + (n+1) H(+)(in) = a plastoquinol + NADP(+) + n H(+)(out). In terms of biological role, NDH shuttles electrons from NAD(P)H:plastoquinone, via FMN and iron-sulfur (Fe-S) centers, to quinones in the photosynthetic chain and possibly in a chloroplast respiratory chain. The immediate electron acceptor for the enzyme in this species is believed to be plastoquinone. Couples the redox reaction to proton translocation, and thus conserves the redox energy in a proton gradient. The sequence is that of NAD(P)H-quinone oxidoreductase subunit 3, chloroplastic from Trachelium caeruleum (Blue throatwort).